We begin with the raw amino-acid sequence, 150 residues long: Arginine repressor (150 aa).

This sequence belongs to the ArgR family.

It localises to the cytoplasm. It participates in amino-acid biosynthesis; L-arginine biosynthesis [regulation]. Regulates arginine biosynthesis genes. The chain is Arginine repressor from Staphylococcus carnosus (strain TM300).